We begin with the raw amino-acid sequence, 147 residues long: Allograft inflammatory factor 1 (147 aa).

An N-acetylserine modification is found at Ser2. Lys11 is subject to N6-acetyllysine. Ser39 carries the phosphoserine modification. The region spanning 45-80 is the EF-hand 1 domain; the sequence is SKLEAFKKKYMEFDLNEDGGIDIMSLKRMMEKLGVP. Asp58, Asn60, and Asp62 together coordinate Ca(2+). The region spanning 81–115 is the EF-hand 2; degenerate domain; sequence KTHLELKKLIMEVSSGPGETFSYSDFLKMMLGKRS. The segment at 128–147 is disordered; the sequence is AREQEKPTGLPAKKAISELP.

Phosphorylated on serine residues.

It localises to the cytoplasm. The protein localises to the cytoskeleton. Its subcellular location is the cell projection. The protein resides in the ruffle membrane. It is found in the phagocytic cup. Functionally, may play a role in macrophage activation and function. The polypeptide is Allograft inflammatory factor 1 (AIF1) (Bos taurus (Bovine)).